The sequence spans 276 residues: Pantothenate synthetase (276 aa).

26 to 33 (MGYLHEGH) contacts ATP. His-33 acts as the Proton donor in catalysis. Gln-57 serves as a coordination point for (R)-pantoate. Residue Gln-57 coordinates beta-alanine. 142–145 (GLKD) lines the ATP pocket. Gln-148 lines the (R)-pantoate pocket. Residues Ile-171 and 179-182 (KSSR) each bind ATP.

The protein belongs to the pantothenate synthetase family. Homodimer.

It is found in the cytoplasm. It catalyses the reaction (R)-pantoate + beta-alanine + ATP = (R)-pantothenate + AMP + diphosphate + H(+). The protein operates within cofactor biosynthesis; (R)-pantothenate biosynthesis; (R)-pantothenate from (R)-pantoate and beta-alanine: step 1/1. Its function is as follows. Catalyzes the condensation of pantoate with beta-alanine in an ATP-dependent reaction via a pantoyl-adenylate intermediate. This Exiguobacterium sp. (strain ATCC BAA-1283 / AT1b) protein is Pantothenate synthetase.